Reading from the N-terminus, the 133-residue chain is Putative dispanin subfamily A member 2d (133 aa).

Residues 1 to 57 (MNHTVQTFFSPVNSGQPPNYEMLKEEHKVAVLGVPHNPAPPTSTVIHIRSKTSVPHH) lie on the Extracellular side of the membrane. Residue K24 forms a Glycyl lysine isopeptide (Lys-Gly) (interchain with G-Cter in ubiquitin) linkage. Residues 58-78 (VVWSLFNTLFMNPCCLGFIAF) form a helical membrane-spanning segment. The Cytoplasmic portion of the chain corresponds to 79–107 (AYSVKSRDRKMVGNVTGAQAYASTTKCLN). Glycyl lysine isopeptide (Lys-Gly) (interchain with G-Cter in ubiquitin) cross-links involve residues K83, K88, and K104. Residues 108 to 128 (IWALILGILMTILLIIIPVLI) traverse the membrane as a helical segment. The Extracellular portion of the chain corresponds to 129 to 133 (FQAHR).

This sequence belongs to the CD225/Dispanin family.

The protein resides in the membrane. This is Putative dispanin subfamily A member 2d from Homo sapiens (Human).